Reading from the N-terminus, the 352-residue chain is Transcription factor RSL2 (352 aa).

Over residues 160 to 169 (SVTTTKSLTG) the composition is skewed to polar residues. The tract at residues 160-277 (SVTTTKSLTG…ASRGAATDPQ (118 aa)) is disordered. Over residues 183 to 192 (KRARVNKRAQ) the composition is skewed to basic residues. Residues 223-232 (SRQNSSTTFC) are compositionally biased toward polar residues. The interval 272–285 (AATDPQSLYARKRR) is basic motif. Residues 272–321 (AATDPQSLYARKRRERINERLRILQNLVPNGTKVDISTMLEEAVHYVKFL) enclose the bHLH domain. Residues 286–321 (ERINERLRILQNLVPNGTKVDISTMLEEAVHYVKFL) form a helix-loop-helix motif region.

As to quaternary structure, homodimer. As to expression, expressed in roots. Expressed in root epidermal hair cells.

The protein localises to the nucleus. In terms of biological role, transcription factor involved in the regulation of root hair elongation. Does not seem to be a direct transcriptional target of RHD6 and RSL1. Involved in the regulation of root hair elongation in response to low phosphate. The polypeptide is Transcription factor RSL2 (Arabidopsis thaliana (Mouse-ear cress)).